The following is a 288-amino-acid chain: Plasmodesmata-located protein 6 (288 aa).

An N-terminal signal peptide occupies residues 1-22; the sequence is MFATKTVLFIAVVSLLGTFSSA. Residues 23–256 are Extracellular-facing; that stretch reads AVDTFIYGGC…NNDDDEIEKT (234 aa). Gnk2-homologous domains follow at residues 25–132 and 137–234; these read DTFI…NTTF and DKTV…ARGG. Disulfide bonds link Cys32–Cys110, Cys84–Cys95, Cys98–Cys123, Cys145–Cys212, Cys188–Cys197, and Cys200–Cys225. Residues 257-277 traverse the membrane as a helical segment; the sequence is LAIIVGLIAGVTLLVVFLSFM. The interval 257–277 is necessary and sufficient for plasmodesmal targeting; the sequence is LAIIVGLIAGVTLLVVFLSFM. The Cytoplasmic segment spans residues 278–288; the sequence is AKSCERGKGGK.

The protein belongs to the cysteine-rich repeat secretory protein family. Plasmodesmata-located proteins (PDLD) subfamily. In terms of assembly, (Microbial infection) Interacts with Grapevine fanleaf virus (GFLV) 2B-MP. Highly expressed in inflorescence silique (at mRNA level).

Its subcellular location is the cell membrane. The protein resides in the cell junction. It is found in the plasmodesma. Its function is as follows. Modulates cell-to-cell trafficking. The chain is Plasmodesmata-located protein 6 from Arabidopsis thaliana (Mouse-ear cress).